The primary structure comprises 119 residues: uncharacterized protein (119 aa).

A signal peptide spans 1–23 (MVKWAVSILVNALLLIVIDGYID). 3 helical membrane-spanning segments follow: residues 27–47 (ISSIGAAIIASLILSILNVLI), 50–70 (LLIIFTLPVTMVTLGLFLFVI), and 88–108 (IDGFGTAIWASVILSVFHLLI).

The protein resides in the cell membrane. This is an uncharacterized protein from Bacillus subtilis (strain 168).